The primary structure comprises 754 residues: C2H2 finger domain transcription factor crzA (754 aa).

Disordered regions lie at residues 1–51, 63–150, 187–227, 269–299, and 384–543; these read MASQ…TVTG, SFAN…FSDL, VHQQ…QGST, QGHR…FDGV, and GAEG…RVQK. A compositionally biased stretch (low complexity) spans 30–44; the sequence is HQQQQQQQHQQHQGQ. 2 stretches are compositionally biased toward polar residues: residues 63–80 and 94–114; these read SFAN…SPSA and TPAS…QSYG. A compositionally biased stretch (low complexity) spans 130–140; the sequence is QQQSQQQHHQQ. Polar residues predominate over residues 141–150; it reads PSLDDNFSDL. Low complexity predominate over residues 189-209; the sequence is QQSHPTQIPSSHSSTSPQISP. Composition is skewed to polar residues over residues 210–227 and 279–293; these read LEQQ…QGST and SEIS…LSQH. Composition is skewed to low complexity over residues 459 to 472 and 491 to 515; these read STSR…SSSL and RQQQ…STSS. 2 consecutive C2H2-type zinc fingers follow at residues 548–570 and 576–598; these read FQCN…LRTH and FVCT…EGLH. The C2H2-type 3; degenerate zinc-finger motif lies at 604 to 635; that stretch reads FVCQGELSRGGQWGCGRRFARADALGRHFRSE. The segment at 708–737 is disordered; the sequence is ADDPSDIGGRSSFDASSGNEFGFEDDDSGL.

The protein resides in the nucleus. The protein localises to the cytoplasm. Its function is as follows. Transcription factor involved in the regulation of calcium ion homeostasis. Regulates genes encoding calcium transporters, transcription factors and genes that could be directly or indirectly involved in calcium metabolism. Supports especially pmcA, pmcB and pmcC expression encoding for calcium-translocating P-type ATPases. Binds target promoters at motif A[GT][CG]CA[AC][AG]. Plays an essential role germination, radial growth, and asexual development. Also plays a major role in proper chitin and glucan incorporation into the cell wall. Involved in the high-osmolarity glycerol response (HOG) signaling pathway. Required for pathogenicity in an experimental murine model of invasive pulmonary aspergillosis. This Aspergillus fumigatus (strain ATCC MYA-4609 / CBS 101355 / FGSC A1100 / Af293) (Neosartorya fumigata) protein is C2H2 finger domain transcription factor crzA.